A 149-amino-acid chain; its full sequence is Large ribosomal subunit protein bL9 (149 aa).

Belongs to the bacterial ribosomal protein bL9 family.

Functionally, binds to the 23S rRNA. The protein is Large ribosomal subunit protein bL9 of Teredinibacter turnerae (strain ATCC 39867 / T7901).